The following is a 46-amino-acid chain: Iota-conotoxin-like Fi11.8 (46 aa).

A 4-hydroxyproline mark is found at Pro2 and Pro11. Cystine bridges form between Cys5-Cys19, Cys12-Cys22, Cys18-Cys27, and Cys21-Cys38. Residue Pro29 is modified to 4-hydroxyproline. Trp33 is modified (6'-bromotryptophan). A D-phenylalanine modification is found at Phe44.

This sequence belongs to the conotoxin I1 superfamily. In terms of tissue distribution, expressed by the venom duct.

The protein resides in the secreted. Its function is as follows. Iota-conotoxins bind to voltage-gated sodium channels (Nav) and act as agonists by shifting the voltage-dependence of activation to more hyperpolarized levels. Produces general excitatory symptoms. The sequence is that of Iota-conotoxin-like Fi11.8 from Conus figulinus (Fig cone).